The sequence spans 267 residues: Hydroxyethylthiazole kinase (267 aa).

Residue Met-48 participates in substrate binding. ATP is bound by residues Arg-124 and Ser-170. Gly-197 provides a ligand contact to substrate.

This sequence belongs to the Thz kinase family. The cofactor is Mg(2+).

It catalyses the reaction 5-(2-hydroxyethyl)-4-methylthiazole + ATP = 4-methyl-5-(2-phosphooxyethyl)-thiazole + ADP + H(+). The protein operates within cofactor biosynthesis; thiamine diphosphate biosynthesis; 4-methyl-5-(2-phosphoethyl)-thiazole from 5-(2-hydroxyethyl)-4-methylthiazole: step 1/1. In terms of biological role, catalyzes the phosphorylation of the hydroxyl group of 4-methyl-5-beta-hydroxyethylthiazole (THZ). This Leptospira biflexa serovar Patoc (strain Patoc 1 / Ames) protein is Hydroxyethylthiazole kinase.